A 994-amino-acid chain; its full sequence is Phosphoenolpyruvate carboxylase (994 aa).

The interval 1–66 (MKSSGSARAT…QGRTREDKDR (66 aa)) is disordered. Low complexity-rich tracts occupy residues 14-25 (AVSSSSAPAHAE) and 41-54 (AAAR…AASA). Active-site residues include His-204 and Lys-646.

It belongs to the PEPCase type 1 family. Requires Mg(2+) as cofactor.

It carries out the reaction oxaloacetate + phosphate = phosphoenolpyruvate + hydrogencarbonate. Its function is as follows. Forms oxaloacetate, a four-carbon dicarboxylic acid source for the tricarboxylic acid cycle. This chain is Phosphoenolpyruvate carboxylase, found in Burkholderia pseudomallei (strain 668).